The following is a 224-amino-acid chain: LexA repressor (224 aa).

The segment at residues 31-51 is a DNA-binding region (H-T-H motif); that stretch reads RAEIATELGFRSANAAEEHLQ. Residues Ser142 and Lys179 each act as for autocatalytic cleavage activity in the active site.

Belongs to the peptidase S24 family. In terms of assembly, homodimer.

The enzyme catalyses Hydrolysis of Ala-|-Gly bond in repressor LexA.. Represses a number of genes involved in the response to DNA damage (SOS response), including recA and lexA. In the presence of single-stranded DNA, RecA interacts with LexA causing an autocatalytic cleavage which disrupts the DNA-binding part of LexA, leading to derepression of the SOS regulon and eventually DNA repair. The protein is LexA repressor of Albidiferax ferrireducens (strain ATCC BAA-621 / DSM 15236 / T118) (Rhodoferax ferrireducens).